Reading from the N-terminus, the 498-residue chain is MVNIINLWNGIVPMVQDVNVASITAFKSMIDETWDKKIEANTCISRKHRNIIHEVIRDFMKAYPKMDENRKSPLGAPMQWLTQYYILKNEYYKTMLAYDNESLNTKFKTLNIYMITNVGQYILYIVFCIISGKNHNGTPYIYDSEITSNNKNLINDRIKYACKQILHGQLTMALRIRNKFMFIGSPMYLWFNVNGSHVYHEIYDGNVGFHNKEIGRLLYAFMYYLSISDRFLNDFALLKFTYLGESWTFSLSVPEYILYGLGYSVFDTIEKFSNDAILVYIKTNNRNGYDYVEFNKKGIVKVTETKPDNDKRIHAIRLINNSTDVQHIHFGFRNMVIIDNECANIQSSVENATDTGHHQDSKINIKDDDVDDDDYNPKPTPIPEPYPRPPFPRHEYYKRPKLLHVEEPDPVKKDADRIRLDNHILNTLDHNLNSIGHYCCDTAAVDRLEHHIETLGQYAVILARKINMQSLLFPWLLPTVHPHAIDGSIPPHGRSTIL.

Cys-43 and Cys-342 are oxidised to a cystine. The interval 352–391 (ATDTGHHQDSKINIKDDDVDDDDYNPKPTPIPEPYPRPPF) is disordered. Residues 355 to 367 (TGHHQDSKINIKD) show a composition bias toward basic and acidic residues. Over residues 378-390 (KPTPIPEPYPRPP) the composition is skewed to pro residues.

It belongs to the orthopoxvirus OPG153 protein family. Interacts with proteins OPG094 and OPG143. Interacts with OPG154. Interacts with OPG152. Interacts with host laminin.

It is found in the virion membrane. Functionally, envelop protein that mediates acid-dependent endocytosis into host cells. Plays an important role in endocytic entry of the virus by acting as an acid-sensitive membrane fusion suppressor. Low pH in host endosomes triggers conformational changes to allow de-repression of viral fusion complex activity and membrane fusion within vesicles. Also plays a role in bridging the mature virion with structural protein OPG152. The polypeptide is Envelop protein OPG153 (Protein OPG153) (Variola virus (isolate Human/India/Ind3/1967) (VARV)).